A 330-amino-acid chain; its full sequence is Transcription factor TGA2 (330 aa).

Positions 1-48 (MADTSPRTDVSTDDDTDHPDLGSEGALVNTAASDSSDRSKGKMDQKTL) are disordered. The segment covering 35 to 47 (SSDRSKGKMDQKT) has biased composition (basic and acidic residues). In terms of domain architecture, bZIP spans 44–107 (DQKTLRRLAQ…GTGDQAHSTG (64 aa)). Coiled-coil stretches lie at residues 45–142 (QKTL…HAGD) and 217–244 (INNLQQTSQQAEDALSQGMESLQQSLAD). Residues 46–66 (KTLRRLAQNREAARKSRLRKK) are basic motif. Residues 72–86 (LENSRLKLTQLEQEL) are leucine-zipper. One can recognise a DOG1 domain in the interval 111-327 (ALAFDAEHSR…RALSSLWLAR (217 aa)).

This sequence belongs to the bZIP family. As to quaternary structure, binds DNA as a dimer. Interacts with NPR1, NPR3 and NPR4. Interacts with GRXC7/ROXY1 and GRXC9/GRX480. In terms of tissue distribution, expressed in the whole plant.

Its subcellular location is the nucleus. Its function is as follows. Transcriptional activator that binds specifically to the DNA sequence 5'-TGACG-3'. Recognizes ocs elements like the as-1 motif of the cauliflower mosaic virus 35S promoter. Binding to the as-1-like cis elements mediate auxin- and salicylic acid-inducible transcription. Required to induce the systemic acquired resistance (SAR) via the regulation of pathogenesis-related genes expression. Binding to the as-1 element of PR-1 promoter is salicylic acid-inducible and mediated by NPR1. Could also bind to the C-boxes (5'-ATGACGTCAT-3') with high affinity. In Arabidopsis thaliana (Mouse-ear cress), this protein is Transcription factor TGA2 (TGA2).